Consider the following 357-residue polypeptide: Thiamine thiazole synthase 3, chloroplastic (357 aa).

The N-terminal 51 residues, Met1 to Ser51, are a transit peptide targeting the chloroplast. Substrate contacts are provided by residues Ala103, Glu123–Gln124, Gly131, and Ala196. Cys225 carries the post-translational modification 2,3-didehydroalanine (Cys). Substrate-binding positions include Asp227, His242, Met294, and Arg304–Gly306.

It belongs to the THI4 family. Homooctamer. Fe cation is required as a cofactor. Post-translationally, during the catalytic reaction, a sulfide is transferred from Cys-225 to a reaction intermediate, generating a dehydroalanine residue.

The protein resides in the plastid. It localises to the chloroplast. It catalyses the reaction [ADP-thiazole synthase]-L-cysteine + glycine + NAD(+) = [ADP-thiazole synthase]-dehydroalanine + ADP-5-ethyl-4-methylthiazole-2-carboxylate + nicotinamide + 3 H2O + 2 H(+). Functionally, involved in biosynthesis of the thiamine precursor thiazole. Catalyzes the conversion of NAD and glycine to adenosine diphosphate 5-(2-hydroxyethyl)-4-methylthiazole-2-carboxylic acid (ADT), an adenylated thiazole intermediate. The reaction includes an iron-dependent sulfide transfer from a conserved cysteine residue of the protein to a thiazole intermediate. The enzyme can only undergo a single turnover, which suggests it is a suicide enzyme. May have additional roles in adaptation to various stress conditions and in DNA damage tolerance. This Physcomitrium patens (Spreading-leaved earth moss) protein is Thiamine thiazole synthase 3, chloroplastic.